A 382-amino-acid polypeptide reads, in one-letter code: V-type proton ATPase subunit C 1 (382 aa).

Thr2 carries the N-acetylthreonine modification.

The protein belongs to the V-ATPase C subunit family. In terms of assembly, V-ATPase is a heteromultimeric enzyme made up of two complexes: the ATP-hydrolytic V1 complex and the proton translocation V0 complex. The V1 complex consists of three catalytic AB heterodimers that form a heterohexamer, three peripheral stalks each consisting of EG heterodimers, one central rotor including subunits D and F, and the regulatory subunits C and H. The proton translocation complex V0 consists of the proton transport subunit a, a ring of proteolipid subunits c9c'', rotary subunit d, subunits e and f, and the accessory subunits ATP6AP1/Ac45 and ATP6AP2/PRR. As to expression, ubiquitous. Abundant in brain, liver, kidney and testis.

Its subcellular location is the cytoplasmic vesicle. The protein resides in the secretory vesicle. It localises to the synaptic vesicle membrane. The protein localises to the clathrin-coated vesicle membrane. Its function is as follows. Subunit of the V1 complex of vacuolar(H+)-ATPase (V-ATPase), a multisubunit enzyme composed of a peripheral complex (V1) that hydrolyzes ATP and a membrane integral complex (V0) that translocates protons. V-ATPase is responsible for acidifying and maintaining the pH of intracellular compartments and in some cell types, is targeted to the plasma membrane, where it is responsible for acidifying the extracellular environment. Subunit C is necessary for the assembly of the catalytic sector of the enzyme and is likely to have a specific function in its catalytic activity. In Mus musculus (Mouse), this protein is V-type proton ATPase subunit C 1 (Atp6v1c1).